A 749-amino-acid chain; its full sequence is NAD(P)H-quinone oxidoreductase subunit 5, chloroplastic (749 aa).

17 consecutive transmembrane segments (helical) span residues 9–29 (WIIPFLPLPVPMLIGLGLLLF), 40–60 (WAFQSVLLLSIVMIFSMNLSI), 89–109 (IDPLTSIMLILITTVGIMVLI), 125–145 (FAYMSFFSTSMLGLVTSSNLI), 147–167 (IYIFWELVGICSYLLIGFWFT), 185–205 (GDFGLLLGILGFYWITGSFEF), 219–239 (NEVNFVFVTLCAVLLFAGAVA), 258–278 (TPISALIHAATMVAAGIFLVA), 290–312 (IMNFISLIGIITVFLGATLALAQ), 327–347 (LGYMMLALGMGSYRSALFHLI), 354–374 (ALLFLGSGSVIHSMETLVGYC), 396–416 (TSFLLGTLSLCGIPPLACFWS), 425–445 (WLYSPIFAIIAWSTAGLTAFY), 549–569 (LFPILILILFTLFVGFLGIPF), 608–628 (VFSVSIASFGIFIAFFLYKPV), 694–714 (IIDGIPNGVCLISFFVAEVIK), and 725–745 (LFFYFSYVSIFLLIYYFLNVF).

This sequence belongs to the complex I subunit 5 family. NDH is composed of at least 16 different subunits, 5 of which are encoded in the nucleus.

Its subcellular location is the plastid. It is found in the chloroplast thylakoid membrane. The catalysed reaction is a plastoquinone + NADH + (n+1) H(+)(in) = a plastoquinol + NAD(+) + n H(+)(out). It carries out the reaction a plastoquinone + NADPH + (n+1) H(+)(in) = a plastoquinol + NADP(+) + n H(+)(out). Functionally, NDH shuttles electrons from NAD(P)H:plastoquinone, via FMN and iron-sulfur (Fe-S) centers, to quinones in the photosynthetic chain and possibly in a chloroplast respiratory chain. The immediate electron acceptor for the enzyme in this species is believed to be plastoquinone. Couples the redox reaction to proton translocation, and thus conserves the redox energy in a proton gradient. The sequence is that of NAD(P)H-quinone oxidoreductase subunit 5, chloroplastic (ndhF) from Atractylodes lancea (Atractylodes japonica).